The sequence spans 125 residues: Probable growth factor FPV211 (125 aa).

Positions 1–48 are cleaved as a signal peptide; sequence MKEPLIEVKREYNLIKTLTGKKFVVSTSIVVVLLIINMIFYGIRIHEL. An EGF-like domain is found at 80 to 120; the sequence is LFEKCKSKFNNFCIYGECMNIINLDKKFCICNKGYTGNRCD. Intrachain disulfides connect cysteine 84/cysteine 97, cysteine 92/cysteine 108, and cysteine 110/cysteine 119.

The protein resides in the secreted. In Vertebrata (FPV), this protein is Probable growth factor FPV211.